The sequence spans 449 residues: Xylose isomerase (449 aa).

Active-site residues include His-103 and Asp-106. Residues Glu-234, Glu-270, His-273, Asp-298, Asp-309, Asp-311, and Asp-342 each contribute to the Mg(2+) site.

Belongs to the xylose isomerase family. As to quaternary structure, homotetramer. Requires Mg(2+) as cofactor.

The protein resides in the cytoplasm. It catalyses the reaction alpha-D-xylose = alpha-D-xylulofuranose. Functionally, involved in D-xylose catabolism. The sequence is that of Xylose isomerase (xylA) from Lactiplantibacillus pentosus (Lactobacillus pentosus).